The following is a 229-amino-acid chain: UPF0500 protein C1orf216 (229 aa).

The tract at residues 1 to 144 (MFAIQPGLAE…RGPGPPDPLL (144 aa)) is disordered. Over residues 62 to 71 (SESPSDNQAF) the composition is skewed to polar residues. Low complexity-rich tracts occupy residues 84-93 (PPEGAEIPGA) and 115-126 (SSSLSIDSRSSS).

This sequence belongs to the UPF0500 family.

The polypeptide is UPF0500 protein C1orf216 (C1orf216) (Homo sapiens (Human)).